The following is a 138-amino-acid chain: Small ribosomal subunit protein uS11c (138 aa).

Positions 1–24 (MIKPIPRISSRRNGRIGSRKTGRR) are disordered. A compositionally biased stretch (basic residues) spans 9-24 (SSRRNGRIGSRKTGRR).

It belongs to the universal ribosomal protein uS11 family. In terms of assembly, part of the 30S ribosomal subunit.

It is found in the plastid. The protein resides in the chloroplast. The chain is Small ribosomal subunit protein uS11c from Lemna minor (Common duckweed).